The primary structure comprises 316 residues: Apolipoprotein E (316 aa).

The N-terminal stretch at 1-18 (MKVLWVALVITLLAGCQA) is a signal peptide. 8 tandem repeats follow at residues 79–100 (VLMDETMKEVKAYREELEGQLG), 101–122 (PIAQETQARVSKELQAAQARLA), 123–144 (SDMEDVRSRVAQYRSEVQALMG), 145–166 (QTTDELRGRLASHLRKLRKRLL), 167–188 (RDAEDLQKRLVVYRAGALEGSE), 189–210 (RSVSAIRERLGPLVEQGRVRAA), 211–232 (TVGTLASQTLRERAEAWHQKLR), and 233–254 (GRMEEMGTQARDHLEEMREQLE). The tract at residues 79–254 (VLMDETMKEV…HLEEMREQLE (176 aa)) is 8 X 22 AA approximate tandem repeats. The segment at 157-167 (HLRKLRKRLLR) is LDL and other lipoprotein receptors binding. 161–164 (LRKR) contributes to the heparin binding site. Residues 209 to 289 (AATVGTLASQ…SWFEPLVEDM (81 aa)) are lipid-binding and lipoprotein association. Residue 228–235 (HQKLRGRM) coordinates heparin. The tract at residues 265 to 316 (SQMRLQAEAFQARLKSWFEPLVEDMQRQWAGLVEKVQLAMATGPTSAPIENN) is homooligomerization. The interval 277 to 289 (RLKSWFEPLVEDM) is specificity for association with VLDL.

It belongs to the apolipoprotein A1/A4/E family. As to quaternary structure, homotetramer. May interact with ABCA1; functionally associated with ABCA1 in the biogenesis of HDLs. May interact with APP/A4 amyloid-beta peptide; the interaction is extremely stable in vitro but its physiological significance is unclear. May interact with MAPT. May interact with MAP2. In the cerebrospinal fluid, interacts with secreted SORL1. Interacts with PMEL; this allows the loading of PMEL luminal fragment on ILVs to induce fibril nucleation. In terms of processing, APOE exists as multiple glycosylated and sialylated glycoforms within cells and in plasma. The extent of glycosylation and sialylation are tissue and context specific. Post-translationally, glycated in plasma VLDL. Phosphorylated by FAM20C in the extracellular medium.

The protein localises to the secreted. Its subcellular location is the extracellular space. It is found in the extracellular matrix. The protein resides in the extracellular vesicle. It localises to the endosome. The protein localises to the multivesicular body. In terms of biological role, APOE is an apolipoprotein, a protein associating with lipid particles, that mainly functions in lipoprotein-mediated lipid transport between organs via the plasma and interstitial fluids. APOE is a core component of plasma lipoproteins and is involved in their production, conversion and clearance. Apolipoproteins are amphipathic molecules that interact both with lipids of the lipoprotein particle core and the aqueous environment of the plasma. As such, APOE associates with chylomicrons, chylomicron remnants, very low density lipoproteins (VLDL) and intermediate density lipoproteins (IDL) but shows a preferential binding to high-density lipoproteins (HDL). It also binds a wide range of cellular receptors including the LDL receptor/LDLR and the very low-density lipoprotein receptor/VLDLR that mediate the cellular uptake of the APOE-containing lipoprotein particles. Finally, APOE also has a heparin-binding activity and binds heparan-sulfate proteoglycans on the surface of cells, a property that supports the capture and the receptor-mediated uptake of APOE-containing lipoproteins by cells. This Tursiops truncatus (Atlantic bottle-nosed dolphin) protein is Apolipoprotein E (APOE).